The chain runs to 591 residues: Speriolin (591 aa).

Residues 1–42 (MSLLTNYEGLRHQIERLVRENEELKKLVRLIRENHELKSAIK) adopt a coiled-coil conformation. Residues 1–78 (MSLLTNYEGL…NNGVFLPPSP (78 aa)) form a necessary for targeting centrosomes region. Over residues 302 to 314 (NTSDTQAQPSAAQ) the composition is skewed to polar residues. Disordered stretches follow at residues 302 to 331 (NTSD…TSPT) and 346 to 435 (ATSY…ENPR). The segment covering 317 to 331 (VVPASVPTSPTTSPT) has biased composition (low complexity). Composition is skewed to polar residues over residues 346–357 (ATSYTPSSTTHI) and 390–401 (PRTSSSPASVND).

The protein belongs to the speriolin family. Found in a complex with CDC20, CDC27 and TUBG1. Interacts with CDC20. In terms of tissue distribution, detected only in testis.

It is found in the cytoplasm. The protein localises to the cytoskeleton. It localises to the microtubule organizing center. The protein resides in the centrosome. The sequence is that of Speriolin (SPATC1) from Homo sapiens (Human).